Reading from the N-terminus, the 197-residue chain is Recombination protein RecR (197 aa).

The C4-type zinc finger occupies 57–72 (CSRCGYLTDFDPCLIC). Residues 80–174 (SLICIGEESS…KVTRLAHGLP (95 aa)) enclose the Toprim domain.

The protein belongs to the RecR family.

Functionally, may play a role in DNA repair. It seems to be involved in an RecBC-independent recombinational process of DNA repair. It may act with RecF and RecO. The protein is Recombination protein RecR of Syntrophomonas wolfei subsp. wolfei (strain DSM 2245B / Goettingen).